A 149-amino-acid polypeptide reads, in one-letter code: UPF0260 protein Avin_32930 (149 aa).

This sequence belongs to the UPF0260 family.

The sequence is that of UPF0260 protein Avin_32930 from Azotobacter vinelandii (strain DJ / ATCC BAA-1303).